A 464-amino-acid chain; its full sequence is MTDADRARRIFGLETEYGVQHWNPEGRPLSPEEVVRYLFRPVVEWGRSSNVFVANGSRLYLDVGSHPEYATAECSTLDELIASDGAGDLLLHDLVVQAEERMAADGVGGRIHLYRNNADSSGSSYGSHENYLLRRRTEYRRLTEALVPFLVSRQILVGAGRVVPAGTWPEGEGPAHFAFSQRADFVQDGVSSSTTRSRPIINTRDEPHADASEYRRLHVIVGDTNLSEHTHLLRFGATDLLLRMIEAGFPLGDRVVAHPTRAVRQISHDLTGTARIALREGEASALELQEHYLERARAFVAAEGAHHDRVGEILTLWGEVLDAVRTGDRSRIEDRIDWAIKLRLLEDYRARHDLGWDAPRLAQLDLAFHDIDPDRGLFRLLLRRGAVARLLPEDAARSAVETAPPTTRARVRADFVARARERGLDYAVDWTTLKLTDHPLHAIVTKDPFDTSSAAVDRLFGRIA.

E14 contributes to the Mg(2+) binding site. R58 is a binding site for ATP. Y60 serves as a coordination point for Mg(2+). Catalysis depends on D62, which acts as the Proton acceptor. Residue E68 coordinates Mg(2+). ATP-binding residues include T71 and W430.

The protein belongs to the Pup ligase/Pup deamidase family. Pup-conjugating enzyme subfamily.

The enzyme catalyses ATP + [prokaryotic ubiquitin-like protein]-L-glutamate + [protein]-L-lysine = ADP + phosphate + N(6)-([prokaryotic ubiquitin-like protein]-gamma-L-glutamyl)-[protein]-L-lysine.. It functions in the pathway protein degradation; proteasomal Pup-dependent pathway. It participates in protein modification; protein pupylation. Functionally, catalyzes the covalent attachment of the prokaryotic ubiquitin-like protein modifier Pup to the proteasomal substrate proteins, thereby targeting them for proteasomal degradation. This tagging system is termed pupylation. The ligation reaction involves the side-chain carboxylate of the C-terminal glutamate of Pup and the side-chain amino group of a substrate lysine. This chain is Pup--protein ligase, found in Micrococcus luteus (strain ATCC 4698 / DSM 20030 / JCM 1464 / CCM 169 / CCUG 5858 / IAM 1056 / NBRC 3333 / NCIMB 9278 / NCTC 2665 / VKM Ac-2230) (Micrococcus lysodeikticus).